A 251-amino-acid polypeptide reads, in one-letter code: MPANAPLLQFTPPLQPATLILRYKRFLADIVTPAGEALTIHCANTGAMTGCATPGDTIWYSTSDNPKRKYPQSWELTQTQTGDWICVNTMRANELVNLAIEKNQIAELSGYNFVRKEVKYGEENSRIDLLLQAEDRRDCYIEVKSVTLLQQQCGYFPDAVTLRGQKHLRELQNRVVNGHRAVLFFAVLHTGIKQVAPARHIDRRYAELLVQAQQAGVEVICYGFQLSPDGIALNTRLPLLLDEMLSSENAE.

Belongs to the SfsA family.

This chain is Sugar fermentation stimulation protein homolog, found in Yersinia pseudotuberculosis serotype O:1b (strain IP 31758).